Here is a 264-residue protein sequence, read N- to C-terminus: tRNA pseudouridine synthase A (264 aa).

Catalysis depends on aspartate 51, which acts as the Nucleophile. Tyrosine 109 provides a ligand contact to substrate.

Belongs to the tRNA pseudouridine synthase TruA family. Homodimer.

The catalysed reaction is uridine(38/39/40) in tRNA = pseudouridine(38/39/40) in tRNA. In terms of biological role, formation of pseudouridine at positions 38, 39 and 40 in the anticodon stem and loop of transfer RNAs. The polypeptide is tRNA pseudouridine synthase A (Vibrio campbellii (strain ATCC BAA-1116)).